The sequence spans 475 residues: Ribulose bisphosphate carboxylase large chain (475 aa).

Positions 1–2 are excised as a propeptide; the sequence is MS. The residue at position 3 (Pro3) is an N-acetylproline. The residue at position 14 (Lys14) is an N6,N6,N6-trimethyllysine. Substrate-binding residues include Asn123 and Thr173. Residue Lys175 is the Proton acceptor of the active site. Lys177 provides a ligand contact to substrate. Positions 201, 203, and 204 each coordinate Mg(2+). The residue at position 201 (Lys201) is an N6-carboxylysine. His294 acts as the Proton acceptor in catalysis. Substrate is bound by residues Arg295, His327, and Ser379.

This sequence belongs to the RuBisCO large chain family. Type I subfamily. In terms of assembly, heterohexadecamer of 8 large chains and 8 small chains; disulfide-linked. The disulfide link is formed within the large subunit homodimers. It depends on Mg(2+) as a cofactor. Post-translationally, the disulfide bond which can form in the large chain dimeric partners within the hexadecamer appears to be associated with oxidative stress and protein turnover.

It is found in the plastid. The protein localises to the chloroplast. The catalysed reaction is 2 (2R)-3-phosphoglycerate + 2 H(+) = D-ribulose 1,5-bisphosphate + CO2 + H2O. The enzyme catalyses D-ribulose 1,5-bisphosphate + O2 = 2-phosphoglycolate + (2R)-3-phosphoglycerate + 2 H(+). RuBisCO catalyzes two reactions: the carboxylation of D-ribulose 1,5-bisphosphate, the primary event in carbon dioxide fixation, as well as the oxidative fragmentation of the pentose substrate in the photorespiration process. Both reactions occur simultaneously and in competition at the same active site. This chain is Ribulose bisphosphate carboxylase large chain, found in Pinus koraiensis (Korean pine).